The primary structure comprises 420 residues: Dihydrolipoyllysine-residue succinyltransferase component of 2-oxoglutarate dehydrogenase complex (420 aa).

The 76-residue stretch at 1-76 folds into the Lipoyl-binding domain; sequence MAEVKVPELA…EVGQAVAVVG (76 aa). K42 is modified (N6-lipoyllysine). The segment at 75 to 201 is disordered; that stretch reads VGEGQVNTSN…EKMSRRKKTA (127 aa). Positions 81-90 are enriched in polar residues; the sequence is NTSNDSSNES. Over residues 91–102 the composition is skewed to basic and acidic residues; that stretch reads SQKDEAKEKETP. The span at 103-127 shows a compositional bias: polar residues; it reads KQSNPNSSESENTQDNSQQRINATP. A Peripheral subunit-binding (PSBD) domain is found at 124–160; that stretch reads NATPSARRHARKNGVDLSEVSGKGNDVLRKDDVENSQ. A compositionally biased stretch (basic and acidic residues) spans 149–158; the sequence is DVLRKDDVEN. Low complexity predominate over residues 159–188; sequence SQKSSSQTAKSESKSQNSGSKQSNNNPSKP. Catalysis depends on residues H391 and D395.

It belongs to the 2-oxoacid dehydrogenase family. In terms of assembly, forms a 24-polypeptide structural core with octahedral symmetry. Part of the 2-oxoglutarate dehydrogenase (OGDH) complex composed of E1 (2-oxoglutarate dehydrogenase), E2 (dihydrolipoamide succinyltransferase) and E3 (dihydrolipoamide dehydrogenase); the complex contains multiple copies of the three enzymatic components (E1, E2 and E3). It depends on (R)-lipoate as a cofactor.

The catalysed reaction is N(6)-[(R)-dihydrolipoyl]-L-lysyl-[protein] + succinyl-CoA = N(6)-[(R)-S(8)-succinyldihydrolipoyl]-L-lysyl-[protein] + CoA. It participates in amino-acid degradation; L-lysine degradation via saccharopine pathway; glutaryl-CoA from L-lysine: step 6/6. E2 component of the 2-oxoglutarate dehydrogenase (OGDH) complex which catalyzes the second step in the conversion of 2-oxoglutarate to succinyl-CoA and CO(2). In Staphylococcus epidermidis (strain ATCC 12228 / FDA PCI 1200), this protein is Dihydrolipoyllysine-residue succinyltransferase component of 2-oxoglutarate dehydrogenase complex (odhB).